The sequence spans 312 residues: uncharacterized protein (312 aa).

This sequence belongs to the asfivirus CP312R family.

It localises to the virion. This is an uncharacterized protein from African swine fever virus (isolate Tick/Malawi/Lil 20-1/1983) (ASFV).